The following is a 399-amino-acid chain: Probable 2,3-bisphosphoglycerate-independent phosphoglycerate mutase (399 aa).

The protein belongs to the BPG-independent phosphoglycerate mutase family. A-PGAM subfamily.

The catalysed reaction is (2R)-2-phosphoglycerate = (2R)-3-phosphoglycerate. It participates in carbohydrate degradation; glycolysis; pyruvate from D-glyceraldehyde 3-phosphate: step 3/5. Functionally, catalyzes the interconversion of 2-phosphoglycerate and 3-phosphoglycerate. This is Probable 2,3-bisphosphoglycerate-independent phosphoglycerate mutase from Geobacter sulfurreducens (strain ATCC 51573 / DSM 12127 / PCA).